Consider the following 168-residue polypeptide: Cysteine-rich perinuclear theca protein 1 (168 aa).

Residues 144-168 (NVSDPEEVPPCLDSDPFPNGDLASS) are disordered.

In terms of tissue distribution, specifically expressed in spermatozoa (at protein level). Detected from the elongated spermatid stage onwards; not found in immature germ cells or somatic cells (at protein level).

It is found in the cytoplasm. It localises to the cytoskeleton. The protein localises to the perinuclear theca. The polypeptide is Cysteine-rich perinuclear theca protein 1 (Mus musculus (Mouse)).